The chain runs to 446 residues: Inward rectifier potassium channel 4 (446 aa).

At M1–W55 the chain is on the cytoplasmic side. The helical transmembrane segment at R56 to I80 threads the bilayer. Residues A81–G120 are Extracellular-facing. Residues P91–A111 are val/Gly/Ala/Pro stretch. Positions F121–Q132 form an intramembrane region, helical; Pore-forming. Residues T133 to F139 constitute an intramembrane region (pore-forming). The Selectivity filter motif lies at T134–F139. Topologically, residues R140–L148 are extracellular. Residues A149 to T170 form a helical membrane-spanning segment. At I171–I446 the chain is on the cytoplasmic side. The PDZ-binding motif lies at S444–I446.

This sequence belongs to the inward rectifier-type potassium channel (TC 1.A.2.1) family. KCNJ4 subfamily. In terms of assembly, homomultimeric and heteromultimeric association with KCNJ2 and KCNJ12. Interacts with DLG2 and DLG4. Associates, via its PDZ-recognition domain, with a complex containing LIN7A, LIN7B, LIN7C, DLG1, CASK and APBA1. Interacts with TAX1BP3. TAX1BP3 competes with LIN7 family members for KCNJ4 binding. In terms of tissue distribution, detected in kidney distal convoluted tubules (at protein level). Widely expressed throughout the brain. Also found in some peripheral tissues.

The protein localises to the cell membrane. It is found in the cytoplasmic vesicle membrane. Its subcellular location is the postsynaptic cell membrane. It catalyses the reaction K(+)(in) = K(+)(out). Its function is as follows. Inward rectifier potassium channels are characterized by a greater tendency to allow potassium to flow into the cell rather than out of it. Their voltage dependence is regulated by the concentration of extracellular potassium; as external potassium is raised, the voltage range of the channel opening shifts to more positive voltages. The inward rectification is mainly due to the blockage of outward current by internal magnesium. Can be blocked by extracellular barium and cesium. This chain is Inward rectifier potassium channel 4 (Kcnj4), found in Rattus norvegicus (Rat).